The chain runs to 279 residues: uncharacterized protein (279 aa).

Positions 60–92 (RKANKLNNKQDSTFFNSASGETNNTILPPGVKN) are disordered. Over residues 70 to 85 (DSTFFNSASGETNNTI) the composition is skewed to polar residues. 3 helical membrane passes run 156–176 (IVGY…AVMN), 202–222 (ISIF…ILFL), and 237–257 (FIWI…LLMI).

Its subcellular location is the cell membrane. This is an uncharacterized protein from Mycoplasma genitalium (strain ATCC 33530 / DSM 19775 / NCTC 10195 / G37) (Mycoplasmoides genitalium).